The sequence spans 335 residues: L-tyrosine isonitrile synthase (335 aa).

It belongs to the isocyanide synthase family.

It carries out the reaction D-ribulose 5-phosphate + L-tyrosine = (2S)-3-(4-hydroxyphenyl)-2-isocyanopropanoate + hydroxyacetone + formaldehyde + phosphate + H2O + H(+). Functionally, involved in the biosynthesis of rhabduscin, a tyrosine derivative which is a potent inhibitor of phenoloxidase, a key component of the insect's innate immune system. Responsible for the synthesis of the isonitrile group on tyrosine using the C2 of ribulose 5-phosphate as the source of the carbon atom. This is L-tyrosine isonitrile synthase from Xenorhabdus nematophila (strain ATCC 19061 / DSM 3370 / CCUG 14189 / LMG 1036 / NCIMB 9965 / AN6).